Here is a 105-residue protein sequence, read N- to C-terminus: Large ribosomal subunit protein uL24 (105 aa).

Belongs to the universal ribosomal protein uL24 family. As to quaternary structure, part of the 50S ribosomal subunit.

Functionally, one of two assembly initiator proteins, it binds directly to the 5'-end of the 23S rRNA, where it nucleates assembly of the 50S subunit. In terms of biological role, one of the proteins that surrounds the polypeptide exit tunnel on the outside of the subunit. This is Large ribosomal subunit protein uL24 from Dictyoglomus turgidum (strain DSM 6724 / Z-1310).